We begin with the raw amino-acid sequence, 941 residues long: Myosin heavy chain kinase D (941 aa).

The stretch at 8 to 48 (KLSKKIEKILEKNDYLKKKVEQLTKSVDNHEFKIQELLLLL) forms a coiled coil. Low complexity-rich tracts occupy residues 57 to 70 (TTTT…NNST), 84 to 115 (TSTD…TTTS), and 124 to 206 (NSNN…PQLS). Disordered stretches follow at residues 57–234 (TTTT…KEDS) and 276–310 (SSNN…QQQQ). Residues 289-317 (SILNDQQNQQQNQQQQNQQQQQEEINFIT) are a coiled coil. The 246-residue stretch at 337-582 (EYSANDDEWT…ICLQFGLPPI (246 aa)) folds into the Alpha-type protein kinase domain. WD repeat units lie at residues 635–674 (GHDE…DLSK), 683–720 (AHRR…TTTT), 741–780 (DHTA…CIKS), 783–820 (AHGK…CVYG), 824–861 (AHDA…PTTT), 864–902 (QHNM…EPIK), and 909–941 (AHRS…WKNK).

Belongs to the protein kinase superfamily. Alpha-type protein kinase family. ALPK subfamily.

It catalyses the reaction L-threonyl-[myosin heavy-chain] + ATP = O-phospho-L-threonyl-[myosin heavy-chain] + ADP + H(+). Phosphorylates threonine. Not critical for regulating the assembly and disassembly of myosin II filament. This Dictyostelium discoideum (Social amoeba) protein is Myosin heavy chain kinase D (mhkD).